The chain runs to 336 residues: Cytoskeleton protein RodZ (336 aa).

Topologically, residues 1–111 are cytoplasmic; it reads MNTEATHDQN…LGKRRKKRDG (111 aa). In terms of domain architecture, HTH cro/C1-type spans 19–71; the sequence is LRNAREQLGLSQQAVAERLCLKVSTVRDIEEDKAPADLASTFLRGYIRSYARL. A DNA-binding region (H-T-H motif) is located at residues 30–49; it reads QQAVAERLCLKVSTVRDIEE. Residues 112–132 form a helical; Signal-anchor for type II membrane protein membrane-spanning segment; it reads WLMTFTWLVLFVVIGLSGAWW. Over 133 to 336 the chain is Periplasmic; that stretch reads WQDHKAQQEE…TLNAEQSPAQ (204 aa). Polar residues predominate over residues 148-164; sequence DQSSAELNNNQSQSVPL. The interval 148–245 is disordered; that stretch reads DQSSAELNNN…PLPTDQAGVT (98 aa). Residues 165–201 show a composition bias toward low complexity; the sequence is DTSTTTDQAMATTPTSPVDTTATNTQTPAATTAPSPT. Over residues 202 to 217 the composition is skewed to polar residues; sequence VDSQQNAVVPPSQANV. Over residues 218 to 240 the composition is skewed to low complexity; that stretch reads DTAATPAPAATTTPDGAAPLPTD.

This sequence belongs to the RodZ family.

The protein resides in the cell inner membrane. In terms of biological role, cytoskeletal protein that is involved in cell-shape control through regulation of the length of the long axis. The chain is Cytoskeleton protein RodZ from Escherichia coli O7:K1 (strain IAI39 / ExPEC).